The chain runs to 327 residues: Phenylalanine--tRNA ligase alpha subunit (327 aa).

A Mg(2+)-binding site is contributed by glutamate 252.

The protein belongs to the class-II aminoacyl-tRNA synthetase family. Phe-tRNA synthetase alpha subunit type 1 subfamily. As to quaternary structure, tetramer of two alpha and two beta subunits. Mg(2+) is required as a cofactor.

The protein localises to the cytoplasm. It carries out the reaction tRNA(Phe) + L-phenylalanine + ATP = L-phenylalanyl-tRNA(Phe) + AMP + diphosphate + H(+). The chain is Phenylalanine--tRNA ligase alpha subunit from Photobacterium profundum (strain SS9).